The sequence spans 290 residues: MGKADIVIKGSKDGLTFFLDSQCDFSELAAAIETKLASADFFLVGAHVTVDVGTRQLHPDQIERLQTLFPSYGLILRGINSWADPVGQHDEEERVVLKGNRERIYQIANHLYESTERADGAARNYDYRDESASSFSPVGTAPDYAEATTEPADCFGGSPSDMQTAILTQGGDERTLLIQRTLRSGQTVRYPGHVVILGDVNPGAEVVAGGNIIVMGVFRGVAHAGAMGSDEAVVTAYRLRPTQLRIANHITRPPDEEEEGPEHPEIARIRDGMVTIERYHYGTKSYGKDV.

The protein belongs to the MinC family. As to quaternary structure, interacts with MinD and FtsZ.

Functionally, cell division inhibitor that blocks the formation of polar Z ring septums. Rapidly oscillates between the poles of the cell to destabilize FtsZ filaments that have formed before they mature into polar Z rings. Prevents FtsZ polymerization. The polypeptide is Probable septum site-determining protein MinC (Heliobacterium modesticaldum (strain ATCC 51547 / Ice1)).